The following is a 705-amino-acid chain: Structure-specific endonuclease subunit SLX1 homolog (705 aa).

The GIY-YIG domain maps to Arg-4–Ile-90. 2 disordered regions span residues Arg-155–Gly-192 and Ala-290–Thr-323. Composition is skewed to polar residues over residues Arg-160 to Gly-175 and Ser-310 to Arg-320. Residues Cys-446–Cys-526 form an SLX1-type zinc finger. Low complexity predominate over residues Lys-595 to Ala-604. Residues Lys-595–Ser-628 are disordered.

The protein belongs to the SLX1 family. As to quaternary structure, forms a heterodimer with a member of the SLX4 family. A divalent metal cation serves as cofactor.

The protein localises to the nucleus. Its function is as follows. Catalytic subunit of a heterodimeric structure-specific endonuclease that resolves DNA secondary structures generated during DNA repair and recombination. Has endonuclease activity towards branched DNA substrates, introducing single-strand cuts in duplex DNA close to junctions with ss-DNA. The polypeptide is Structure-specific endonuclease subunit SLX1 homolog (Leishmania infantum).